The following is a 497-amino-acid chain: RNA polymerase sigma factor SigA (497 aa).

Disordered regions lie at residues 1–20 and 62–86; these read MSTD…PELS and KTLH…HAPL. The span at 63-73 shows a compositional bias: basic and acidic residues; sequence TLHENKESDVP. Positions 74–84 are enriched in basic residues; it reads KKRRGRKPKHA. Positions 250-320 are sigma-70 factor domain-2; the sequence is LVTSNLRLVV…TRAIADQART (71 aa). The Interaction with polymerase core subunit RpoC motif lies at 274–277; that stretch reads DLIQ. Positions 329-410 are sigma-70 factor domain-3; sequence ETINRLAKAE…DTDAQTPDEF (82 aa). The sigma-70 factor domain-4 stretch occupies residues 423 to 478; that stretch reads LLNNNLSEQEELIVRMRIGMPPYNEPKTLDEVGQKILIPREKIRQIENKAIRKLRH. The segment at residues 451–470 is a DNA-binding region (H-T-H motif); sequence LDEVGQKILIPREKIRQIEN.

This sequence belongs to the sigma-70 factor family. RpoD/SigA subfamily. In terms of assembly, interacts transiently with the RNA polymerase catalytic core.

Its subcellular location is the cytoplasm. Sigma factors are initiation factors that promote the attachment of RNA polymerase to specific initiation sites and are then released. This sigma factor is the primary sigma factor during exponential growth. This is RNA polymerase sigma factor SigA from Mycoplasma genitalium (strain ATCC 33530 / DSM 19775 / NCTC 10195 / G37) (Mycoplasmoides genitalium).